The chain runs to 150 residues: Ribonuclease H (150 aa).

The RNase H type-1 domain maps to 1-141 (MKSIEVHTDG…VDVLARNQAT (141 aa)). Mg(2+) is bound by residues D9, E47, D69, and D133.

The protein belongs to the RNase H family. In terms of assembly, monomer. Mg(2+) serves as cofactor.

It is found in the cytoplasm. It catalyses the reaction Endonucleolytic cleavage to 5'-phosphomonoester.. Its function is as follows. Endonuclease that specifically degrades the RNA of RNA-DNA hybrids. This Xanthomonas oryzae pv. oryzae (strain MAFF 311018) protein is Ribonuclease H.